The sequence spans 80 residues: D-alanyl carrier protein 2 (80 aa).

In terms of domain architecture, Carrier spans 1–80 (MIMDDVKATV…KIVAKVASLQ (80 aa)). The residue at position 38 (S38) is an O-(pantetheine 4'-phosphoryl)serine.

It belongs to the DltC family. In terms of processing, 4'-phosphopantetheine is transferred from CoA to a specific serine of apo-DCP.

Its subcellular location is the cytoplasm. Its pathway is cell wall biogenesis; lipoteichoic acid biosynthesis. Its function is as follows. Carrier protein involved in the D-alanylation of lipoteichoic acid (LTA). The loading of thioester-linked D-alanine onto DltC is catalyzed by D-alanine--D-alanyl carrier protein ligase DltA. The DltC-carried D-alanyl group is further transferred to cell membrane phosphatidylglycerol (PG) by forming an ester bond, probably catalyzed by DltD. D-alanylation of LTA plays an important role in modulating the properties of the cell wall in Gram-positive bacteria, influencing the net charge of the cell wall. This chain is D-alanyl carrier protein 2, found in Lactiplantibacillus plantarum (strain ATCC BAA-793 / NCIMB 8826 / WCFS1) (Lactobacillus plantarum).